A 171-amino-acid polypeptide reads, in one-letter code: MKIWKDVFTGDEMFSDTYKVKLVDDVMYEVYGKHVSRTLGDVQLDGANPSAEEAEEGTESATESGVDIVLNHRLVETGFSDKKQFTTYLKDYMKKLVTRLEEKSPGEVEVFKTNINKVMKDLLGRFKDLQFFTGESMDCEGLIAMLEYRDIDGESVPVLLCFKHGLEEEKF.

Positions 1–171 constitute a TCTP domain; that stretch reads MKIWKDVFTG…FKHGLEEEKF (171 aa).

It belongs to the TCTP family.

Its subcellular location is the cytoplasm. In terms of biological role, involved in calcium binding and microtubule stabilization. The polypeptide is Translationally-controlled tumor protein homolog (Anopheles gambiae (African malaria mosquito)).